We begin with the raw amino-acid sequence, 126 residues long: Glycine cleavage system H protein (126 aa).

Residues 22–104 form the Lipoyl-binding domain; that stretch reads TVTIGITEYA…YEKAWMVKVE (83 aa). N6-lipoyllysine is present on Lys63.

It belongs to the GcvH family. The glycine cleavage system is composed of four proteins: P, T, L and H. (R)-lipoate is required as a cofactor.

Functionally, the glycine cleavage system catalyzes the degradation of glycine. The H protein shuttles the methylamine group of glycine from the P protein to the T protein. Its function is as follows. Is also involved in protein lipoylation via its role as an octanoyl/lipoyl carrier protein intermediate. This is Glycine cleavage system H protein from Staphylococcus haemolyticus (strain JCSC1435).